The primary structure comprises 72 residues: UPF0154 protein lhv_1362 (72 aa).

Residues 3-23 form a helical membrane-spanning segment; it reads LGLAIFLIIIALLVGAVAGFY.

Belongs to the UPF0154 family.

The protein resides in the cell membrane. This chain is UPF0154 protein lhv_1362, found in Lactobacillus helveticus (strain DPC 4571).